The following is a 2222-amino-acid chain: DNA polymerase epsilon catalytic subunit A (2222 aa).

A disordered region spans residues 90 to 110 (ETLSSGSNGGGNSNDGERVTT). The Zn(2+) site is built by Cys-2108, Cys-2111, Cys-2130, and Cys-2133. The segment at 2108-2133 (CEYCFFISDIDFCKAAPESIFSCVRC) adopts a CysA-type zinc-finger fold. 4 residues coordinate [4Fe-4S] cluster: Cys-2164, Cys-2167, Cys-2179, and Cys-2181. A CysB motif motif is present at residues 2164–2181 (CSRCHKVKRDYMSAHCPC).

The protein belongs to the DNA polymerase type-B family. In terms of assembly, DNA polymerase epsilon is a heterotetramer consisting of POL2, DPB2, DPB3 and DPB4. [4Fe-4S] cluster serves as cofactor.

It localises to the nucleus. It catalyses the reaction DNA(n) + a 2'-deoxyribonucleoside 5'-triphosphate = DNA(n+1) + diphosphate. In terms of biological role, catalytic component of the DNA polymerase epsilon complex which participates in chromosomal DNA replication. Required during synthesis of the leading DNA strands at the replication fork, binds at/or near replication origins and moves along DNA with the replication fork. Has 3'-5' proofreading exonuclease activity that corrects errors arising during DNA replication. This is DNA polymerase epsilon catalytic subunit A (POL2) from Saccharomyces cerevisiae (strain ATCC 204508 / S288c) (Baker's yeast).